The chain runs to 184 residues: HVA22-like protein c (184 aa).

Helical transmembrane passes span 13–33 (VLIK…YPLY), 51–71 (LTYW…SKPL), and 73–93 (WFPI…LPQF).

Belongs to the DP1 family. In terms of tissue distribution, predominantly expressed in flower buds and stem.

Its subcellular location is the membrane. The protein is HVA22-like protein c (HVA22C) of Arabidopsis thaliana (Mouse-ear cress).